The sequence spans 262 residues: Ankyrin repeat domain-containing protein 7 (262 aa).

ANK repeat units lie at residues 67-96 (KYRT…KINI), 100-129 (ENKS…DPNL), 133-162 (RYNT…DLEA), 166-195 (DGYT…DVNA), and 199-228 (YQRT…ELSC).

In Macaca fascicularis (Crab-eating macaque), this protein is Ankyrin repeat domain-containing protein 7 (ANKRD7).